A 235-amino-acid polypeptide reads, in one-letter code: Zorya protein ZorB (235 aa).

The helical transmembrane segment at 25-44 (LMAGLMMVFMFISIAYMHYV) threads the bilayer. The 139-residue stretch at 87–225 (QTLEVRFKSP…RVTFKVVTNA (139 aa)) folds into the OmpA-like domain.

The protein belongs to the MotB family.

It is found in the cell inner membrane. Functionally, component of antiviral defense system Zorya type II, composed of ZorA, ZorB and ZorE. Expression of Zorya type II in E.coli (strain MG1655) confers resistance to phages SECphi7 and T7. While most T7 infected Zorya-containing cells undergo abortive infection, a minority produce viable phage progeny. These eventually accumulate to a high multiplicity of infection, leading to culture collapse by 170 minutes after initial infection. ZorA and ZorB probably assemble in the cell inner membrane and exert their effect there. This is Zorya protein ZorB from Escherichia coli (strain ATCC 8739 / DSM 1576 / NBRC 3972 / NCIMB 8545 / WDCM 00012 / Crooks).